The chain runs to 149 residues: Transcription antitermination protein NusB (149 aa).

The protein belongs to the NusB family.

Functionally, involved in transcription antitermination. Required for transcription of ribosomal RNA (rRNA) genes. Binds specifically to the boxA antiterminator sequence of the ribosomal RNA (rrn) operons. This chain is Transcription antitermination protein NusB, found in Acinetobacter baumannii (strain AB307-0294).